We begin with the raw amino-acid sequence, 204 residues long: VEL1-related protein AC977.05c (204 aa).

A signal peptide spans 1-17; sequence MIFKNLISLFFIGLATA.

It belongs to the VEL1 family.

The protein localises to the cytoplasm. It localises to the cytosol. This Schizosaccharomyces pombe (strain 972 / ATCC 24843) (Fission yeast) protein is VEL1-related protein AC977.05c.